Consider the following 359-residue polypeptide: Type II methyltransferase M.HinfI (359 aa).

The RAMA domain occupies 275 to 358 (KVPMKTLIEA…LDSLRYEYTN (84 aa)).

The protein belongs to the N(4)/N(6)-methyltransferase family.

The catalysed reaction is a 2'-deoxyadenosine in DNA + S-adenosyl-L-methionine = an N(6)-methyl-2'-deoxyadenosine in DNA + S-adenosyl-L-homocysteine + H(+). A beta subtype methylase that recognizes the double-stranded sequence 5'-GANTC-3', methylates A-2 on both strands, and protects the DNA from cleavage by the HinfI endonuclease. In Haemophilus influenzae, this protein is Type II methyltransferase M.HinfI (hinfIM).